Reading from the N-terminus, the 141-residue chain is MRIMGFDLGEATIGVAVSDALQLTAQGKTVIKRQSLEKDIEQVTKLIEDYQVSKLIVGLPKNMNGSLGQMADQIMDFIKSLEQEVDIPIETVDERLTSRMAEQTLLEADVSRKKRKQVIDKLAAVNILQTYLDRQVNKNNN.

It belongs to the YqgF nuclease family.

It is found in the cytoplasm. Functionally, could be a nuclease involved in processing of the 5'-end of pre-16S rRNA. The polypeptide is Putative pre-16S rRNA nuclease (Natranaerobius thermophilus (strain ATCC BAA-1301 / DSM 18059 / JW/NM-WN-LF)).